The following is a 178-amino-acid chain: Signaling threshold-regulating transmembrane adapter 1 (178 aa).

At 1-23 the chain is on the extracellular side; sequence MSRENNCTTADLAWGIPSITQAW. The N-linked (GlcNAc...) asparagine glycan is linked to Asn6. The helical; Signal-anchor for type III membrane protein transmembrane segment at 24–44 threads the bilayer; that stretch reads GLWALFGVVTMLLLISLAALL. The Cytoplasmic segment spans residues 45–178; it reads SQWTRGRRRT…AYANSQPAPS (134 aa). 2 positions are modified to phosphoserine: Ser62 and Ser65. Phosphotyrosine is present on Tyr72. An interaction with GRB2 region spans residues 72–75; the sequence is YGNL. The tract at residues 81–102 is disordered; sequence GRLSEESRSEEQDPSSGGLARG. A phosphoserine mark is found at Ser84, Ser87, and Ser89. The residue at position 109 (Tyr109) is a Phosphotyrosine. Phosphothreonine is present on Thr126. Residues 128–133 form an interaction with PTPN11 region; it reads IKYCEV. A phosphotyrosine mark is found at Tyr130 and Tyr151. Residues 151 to 154 form an interaction with CSK region; sequence YASV. Ser164 carries the phosphoserine modification. The residue at position 170 (Tyr170) is a Phosphotyrosine. The tract at residues 170–173 is interaction with GRB2; sequence YANS.

As to quaternary structure, homodimer; disulfide-linked. When phosphorylated, interacts with PTPN11/SHP2, GRB2 and CSK. Phosphorylated on tyrosines upon TCR activation; which promotes recruitment of PTPN11, GRB2 and CSK. Lymph node, spleen and thymus.

It localises to the cell membrane. Functionally, negatively regulates T-cell antigen receptor (TCR)-mediated signaling. Involved in positive selection of T-cells. This is Signaling threshold-regulating transmembrane adapter 1 (Sit1) from Rattus norvegicus (Rat).